The following is a 216-amino-acid chain: Somatotropin (216 aa).

The N-terminal stretch at 1-26 (MATDSRTSWLLTVSLLCLLWPQEASA) is a signal peptide. His-45 lines the Zn(2+) pocket. The cysteines at positions 78 and 189 are disulfide-linked. A Phosphoserine modification is found at Ser-131. Glu-198 contributes to the Zn(2+) binding site. Cysteines 206 and 214 form a disulfide.

This sequence belongs to the somatotropin/prolactin family.

The protein resides in the secreted. In terms of biological role, plays an important role in growth control. Its major role in stimulating body growth is to stimulate the liver and other tissues to secrete IGF1. It stimulates both the differentiation and proliferation of myoblasts. It also stimulates amino acid uptake and protein synthesis in muscle and other tissues. This Mus musculus (Mouse) protein is Somatotropin (Gh1).